The primary structure comprises 603 residues: NADH-ubiquinone oxidoreductase chain 5 (603 aa).

17 helical membrane-spanning segments follow: residues 4–24 (YATM…TTFI), 38–58 (SIVA…LCLD), 87–107 (MMFI…SLWY), 114–134 (INQF…LVTA), 140–160 (LFIG…WWYA), 171–191 (AILY…WFLL), 210–230 (LIPL…LGLH), 241–261 (TPVS…FLLI), 272–292 (LAQT…AVCA), 301–320 (IVAF…IGIG), 325–347 (AFLH…GSII), 370–390 (STSL…TGFY), 407–429 (WALS…MILL), 457–477 (LTIG…PTSV), 482–502 (IPLY…LTAL), 537–557 (IPYL…DLIW), and 582–602 (GLIK…LLLI).

The protein belongs to the complex I subunit 5 family. In terms of assembly, core subunit of respiratory chain NADH dehydrogenase (Complex I) which is composed of 45 different subunits.

It is found in the mitochondrion inner membrane. The catalysed reaction is a ubiquinone + NADH + 5 H(+)(in) = a ubiquinol + NAD(+) + 4 H(+)(out). In terms of biological role, core subunit of the mitochondrial membrane respiratory chain NADH dehydrogenase (Complex I) which catalyzes electron transfer from NADH through the respiratory chain, using ubiquinone as an electron acceptor. Essential for the catalytic activity and assembly of complex I. This Gorilla gorilla gorilla (Western lowland gorilla) protein is NADH-ubiquinone oxidoreductase chain 5 (MT-ND5).